Consider the following 542-residue polypeptide: DNA-binding protein modulo (542 aa).

Positions 1 to 166 (MAQKKAVTVK…RGIPKVKVGK (166 aa)) are disordered. Phosphoserine is present on residues Ser-42 and Ser-44. Acidic residues predominate over residues 59–114 (SEEDESDVEEQNDEQPGDDSDFETEEAAGLIDDEAEEDEEYNSDDEEDDDDDELEP). Phosphoserine is present on residues Ser-120, Ser-129, and Ser-142. Residues 123 to 135 (ADEVDESDDDEEA) show a composition bias toward acidic residues. Over residues 136–158 (PVEKPVSKKSEKANSEKSEENRG) the composition is skewed to basic and acidic residues. 4 consecutive RRM domains span residues 175–251 (QIVF…QPRN), 258–331 (RTVV…RISQ), 340–429 (LTLV…NLTS), and 420–489 (RAIL…PNSL). At Ser-304 the chain carries Phosphoserine. Residue Ser-330 is modified to Phosphoserine; by PKA. Ser-443 carries the phosphoserine modification. The interval 505–542 (RAPRKFQKDTKPNFGKKPFNKRPAQENGGKSFVKRARF) is disordered.

The N-terminus is blocked.

It localises to the nucleus. In terms of biological role, its capacity to bind DNA and protein(s), and its differential expression during development suggest a role in the regulation of gene expression during Drosophila development. It could, in interaction with other factors, be required for the translation of instructions provided by pattern forming genes and controls, via chromatin changes, the activity of genes critical for the process of morphogenesis of several embryonic territories. This Drosophila melanogaster (Fruit fly) protein is DNA-binding protein modulo (mod).